Consider the following 1391-residue polypeptide: MNELANFANPLASTEHFDHIQISLASPERIRSWSFGEIKKPETINYRTFKPERDGLFCARIFGPIKDYECLCGKYKRMKYKGIVCEKCGVEVTVSKVRRERMGHIELAAPVAHIWFLKSLPSRIGLLLDMQLKQLERVLYFESYIVIEPGLTPLKKFQLLTEDELLEAQDQYGEDSFSAGIGAEAVKKLLEALDLETEREDLLEELKHTKSELKPKKIIKRLKVVESFIESGNRPEWMILEVIPVIPPELRPLVPLDGGRFATSDLNDLYRRVINRNNRLKRLMDLRAPDIIVRNEKRMLQEAVDALFDNGRRGRTITGGNKRPLKSLSDMLKGKQGRFRQNLLGKRVDYSGRSVITTGPELKLHQCGLPKKMALELFKPFIYSRLDAKGLSMTLKQAKKWVEKERKEVWDILEEVIREHPVMLNRAPTLHRLGIQAFEPVLIEGKAIQLHPLVCSAFNADFDGDQMAVHVPLSLEAQLEARVLMMSTNNILSPANGKPIIVPSQDMVLGIYYLSMLKENEPGEGMRLSNMTEVHQALNVGAVTLHSKIISRVPQVNEQGETYMKRVETTPGRMLLGETLPQNYKVPFETINRLLTKKDIADVIDTVYRHTGQKDTVLFADAIMSLGFKYACKAGISFGKDDMIVPAAKEALVEETRALVQDFEQQYQDGLITQQEKYNKVIDAWSRCGDRVAGEMMKEIQMVHKGPDGRELPVNAIYMMAHSGARGSAAQIKQLAGMRGLMAKPSGEIIETPIISNFKEGLTVLEYFNSTHGARKGLADTALKTANSGYLTRRLVDVSQDCVVVEDDCGTERALEMKAITQGGNVIASLGERILGRTLAEDIMGTDGQVAIPIGTLLDEAHIAVIEKIGIQSVKIRSPLVCESHGGVCAACYGRDLARGTPVNIGEAVGVIAAQSIGEPGTQLTMRTFHIGGAAQLNEQSHLEAVTDGRLQFRDLRTIIDPQGKQIALSRTGEVVLVGTDGRELASSRILLGAHLLHNDGDMVKKGDRLAEWDPFTIPVITESAGIVKYQDLVENQTLTEQVDEATGISQRVVIEYRAPRGKEDLRPRLTLMNGDSGETARYMLSPGTVISVDDGQEVLAGTVLARVSRESAKTRDITGGLPRVAELFEARKPKENAIIAKVSGRVEFGKDYKAKRKVIIRPDDGSEPIEYLVPKSKVIDAQEGDHVKRGDNLISGSPDPHDILEVLGVEALAEYLVSEIQEVYRLQGVKINDKHIETIVRQMLLKVEITHAGDSIFLPGEQVEKEDFEAVNAKLESQGQEPAQATPILLGITKASLQTRSFISAASFQETTRVLTEAAVQGKIDTLSGLKENVIVGRLIPAGTGAAMKRLRVTANSRDAALRAANKAVNFEQPTIAIESDNTDTPDAAE.

The Zn(2+) site is built by Cys-70, Cys-72, Cys-85, and Cys-88. Asp-461, Asp-463, and Asp-465 together coordinate Mg(2+). Residues Cys-809, Cys-882, Cys-889, and Cys-892 each coordinate Zn(2+).

It belongs to the RNA polymerase beta' chain family. In terms of assembly, the RNAP catalytic core consists of 2 alpha, 1 beta, 1 beta' and 1 omega subunit. When a sigma factor is associated with the core the holoenzyme is formed, which can initiate transcription. It depends on Mg(2+) as a cofactor. Zn(2+) serves as cofactor.

It carries out the reaction RNA(n) + a ribonucleoside 5'-triphosphate = RNA(n+1) + diphosphate. In terms of biological role, DNA-dependent RNA polymerase catalyzes the transcription of DNA into RNA using the four ribonucleoside triphosphates as substrates. In Zymomonas mobilis subsp. mobilis (strain ATCC 31821 / ZM4 / CP4), this protein is DNA-directed RNA polymerase subunit beta'.